Consider the following 406-residue polypeptide: Succinylornithine transaminase (406 aa).

Residue Lys-252 is modified to N6-(pyridoxal phosphate)lysine.

This sequence belongs to the class-III pyridoxal-phosphate-dependent aminotransferase family. AstC subfamily. Pyridoxal 5'-phosphate serves as cofactor.

It carries out the reaction N(2)-succinyl-L-ornithine + 2-oxoglutarate = N-succinyl-L-glutamate 5-semialdehyde + L-glutamate. It functions in the pathway amino-acid degradation; L-arginine degradation via AST pathway; L-glutamate and succinate from L-arginine: step 3/5. Catalyzes the transamination of N(2)-succinylornithine and alpha-ketoglutarate into N(2)-succinylglutamate semialdehyde and glutamate. Can also act as an acetylornithine aminotransferase. In Escherichia coli (strain 55989 / EAEC), this protein is Succinylornithine transaminase.